Consider the following 984-residue polypeptide: Mineralocorticoid receptor (984 aa).

The interval 1-602 is modulating; it reads METKGYHSLP…STGSSRPSKI (602 aa). Residues 231–243 show a composition bias toward polar residues; sequence QGTPLTCSPNVEN. Disordered stretches follow at residues 231–329 and 346–369; these read QGTP…AAST and SGTS…EKGA. Phosphoserine is present on residues serine 250, serine 259, serine 283, serine 287, and serine 299. Low complexity predominate over residues 259-291; it reads SPLSSPLSSMKSSISSPPSHCSVKSPVSSPNNV. The span at 292–329 shows a compositional bias: polar residues; that stretch reads TLRSSVSSPANINNSRCSVSSPSNTNNRSTLSSPAAST. A compositionally biased stretch (low complexity) spans 346–355; that stretch reads SGTSAGSSTS. Positions 603, 606, 620, 623, 639, 645, 655, and 658 each coordinate Zn(2+). 2 consecutive NR C4-type zinc fingers follow at residues 603–623 and 639–663; these read CLVC…CGSC and CAGR…LQKC. A DNA-binding region (nuclear receptor) is located at residues 603–668; that stretch reads CLVCGDEASG…RLQKCLQAGM (66 aa). A hinge region spans residues 669 to 725; that stretch reads NLGARKSKKLGKLKGIHEEQPQQQQPPPPPPPPQSPEEGTTYIAPAKEPSVNTALVP. The segment at 684 to 710 is disordered; it reads IHEEQPQQQQPPPPPPPPQSPEEGTTY. Over residues 692-703 the composition is skewed to pro residues; the sequence is QQPPPPPPPPQS. An NR LBD domain is found at 726–964; it reads QLSTISRALT…EFPAMLVEII (239 aa). 2 residues coordinate 21-hydroxyprogesterone: asparagine 770 and glutamine 776. Positions 770 and 776 each coordinate aldosterone. Progesterone is bound by residues asparagine 770 and glutamine 776. Positions 782–785 are important for coactivator binding; the sequence is KWAK. 21-hydroxyprogesterone-binding residues include arginine 817 and threonine 945. Residues arginine 817 and threonine 945 each coordinate aldosterone. Positions 817 and 945 each coordinate progesterone.

Belongs to the nuclear hormone receptor family. NR3 subfamily. As to quaternary structure, heteromultimeric cytoplasmic complex with HSP90, HSP70, and FKBP4, in the absence of ligand. After ligand binding, it translocates to the nucleus and binds to DNA as a homodimer and as a heterodimer with NR3C1. Binds the coactivator NCOA2. May interact with HSD11B2 in the absence of ligand. Binds the coactivators NCOA1, TIF1 and NRIP1. Post-translationally, phosphorylated.

It localises to the cytoplasm. It is found in the nucleus. The protein localises to the endoplasmic reticulum membrane. In terms of biological role, receptor for both mineralocorticoids (MC) such as aldosterone and glucocorticoids (GC) such as corticosterone or cortisol. Binds to mineralocorticoid response elements (MRE) and transactivates target genes. The effect of MC is to increase ion and water transport and thus raise extracellular fluid volume and blood pressure and lower potassium levels. The polypeptide is Mineralocorticoid receptor (NR3C2) (Aotus nancymaae (Ma's night monkey)).